The sequence spans 370 residues: Phospho-2-dehydro-3-deoxyheptonate aldolase, phenylalanine-inhibited (370 aa).

The protein belongs to the class-I DAHP synthase family.

The catalysed reaction is D-erythrose 4-phosphate + phosphoenolpyruvate + H2O = 7-phospho-2-dehydro-3-deoxy-D-arabino-heptonate + phosphate. Its pathway is metabolic intermediate biosynthesis; chorismate biosynthesis; chorismate from D-erythrose 4-phosphate and phosphoenolpyruvate: step 1/7. Its activity is regulated as follows. Inhibited by phenyalanine. Functionally, stereospecific condensation of phosphoenolpyruvate (PEP) and D-erythrose-4-phosphate (E4P) giving rise to 3-deoxy-D-arabino-heptulosonate-7-phosphate (DAHP). In Saccharomyces cerevisiae (strain ATCC 204508 / S288c) (Baker's yeast), this protein is Phospho-2-dehydro-3-deoxyheptonate aldolase, phenylalanine-inhibited (ARO3).